A 707-amino-acid polypeptide reads, in one-letter code: Elongation factor G 2 (707 aa).

Residues 8–290 (ERYRNIGISA…AVIDYLPSPA (283 aa)) enclose the tr-type G domain. GTP contacts are provided by residues 17–24 (AHIDAGKT), 88–92 (DTPGH), and 142–145 (NKMD).

This sequence belongs to the TRAFAC class translation factor GTPase superfamily. Classic translation factor GTPase family. EF-G/EF-2 subfamily.

Its subcellular location is the cytoplasm. Functionally, catalyzes the GTP-dependent ribosomal translocation step during translation elongation. During this step, the ribosome changes from the pre-translocational (PRE) to the post-translocational (POST) state as the newly formed A-site-bound peptidyl-tRNA and P-site-bound deacylated tRNA move to the P and E sites, respectively. Catalyzes the coordinated movement of the two tRNA molecules, the mRNA and conformational changes in the ribosome. The sequence is that of Elongation factor G 2 from Bordetella bronchiseptica (strain ATCC BAA-588 / NCTC 13252 / RB50) (Alcaligenes bronchisepticus).